The sequence spans 202 residues: Crossover junction endodeoxyribonuclease RuvC (202 aa).

Catalysis depends on residues D7, E68, and D141. D7, E68, and D141 together coordinate Mg(2+).

The protein belongs to the RuvC family. In terms of assembly, homodimer which binds Holliday junction (HJ) DNA. The HJ becomes 2-fold symmetrical on binding to RuvC with unstacked arms; it has a different conformation from HJ DNA in complex with RuvA. In the full resolvosome a probable DNA-RuvA(4)-RuvB(12)-RuvC(2) complex forms which resolves the HJ. It depends on Mg(2+) as a cofactor.

Its subcellular location is the cytoplasm. The catalysed reaction is Endonucleolytic cleavage at a junction such as a reciprocal single-stranded crossover between two homologous DNA duplexes (Holliday junction).. Its function is as follows. The RuvA-RuvB-RuvC complex processes Holliday junction (HJ) DNA during genetic recombination and DNA repair. Endonuclease that resolves HJ intermediates. Cleaves cruciform DNA by making single-stranded nicks across the HJ at symmetrical positions within the homologous arms, yielding a 5'-phosphate and a 3'-hydroxyl group; requires a central core of homology in the junction. The consensus cleavage sequence is 5'-(A/T)TT(C/G)-3'. Cleavage occurs on the 3'-side of the TT dinucleotide at the point of strand exchange. HJ branch migration catalyzed by RuvA-RuvB allows RuvC to scan DNA until it finds its consensus sequence, where it cleaves and resolves the cruciform DNA. The protein is Crossover junction endodeoxyribonuclease RuvC of Clavibacter michiganensis subsp. michiganensis (strain NCPPB 382).